Reading from the N-terminus, the 238-residue chain is Enoyl-CoA delta isomerase 3 (238 aa).

This sequence belongs to the enoyl-CoA hydratase/isomerase family.

The protein resides in the cytoplasm. It is found in the nucleus. It carries out the reaction a (3Z)-enoyl-CoA = a 4-saturated (2E)-enoyl-CoA. The catalysed reaction is a (3E)-enoyl-CoA = a 4-saturated (2E)-enoyl-CoA. It functions in the pathway lipid metabolism; fatty acid beta-oxidation. Able to isomerize both 3-cis and 3-trans double bonds into the 2-trans form in a range of enoyl-CoA species. Essential for the beta oxidation of unsaturated fatty acids. This chain is Enoyl-CoA delta isomerase 3, found in Arabidopsis thaliana (Mouse-ear cress).